A 67-amino-acid polypeptide reads, in one-letter code: Large ribosomal subunit protein bL35 (67 aa).

A disordered region spans residues 22–52; that stretch reads VLAGPGKKRHNLSARSQKAKRQNRGSQVLTH. Basic residues predominate over residues 27-44; it reads GKKRHNLSARSQKAKRQN.

It belongs to the bacterial ribosomal protein bL35 family.

The sequence is that of Large ribosomal subunit protein bL35 from Granulibacter bethesdensis (strain ATCC BAA-1260 / CGDNIH1).